We begin with the raw amino-acid sequence, 120 residues long: Photosystem II extrinsic protein U (120 aa).

Positions 1 to 29 (MKRLLSLLTGVLVMTGLLMALIFPQSAYA) are cleaved as a signal peptide.

This sequence belongs to the PsbU family. In terms of assembly, PSII is composed of 1 copy each of membrane proteins PsbA, PsbB, PsbC, PsbD, PsbE, PsbF, PsbH, PsbI, PsbJ, PsbK, PsbL, PsbM, PsbT, PsbX, PsbY, Psb30/Ycf12, peripheral proteins PsbO, CyanoQ (PsbQ), PsbU, PsbV and a large number of cofactors. It forms dimeric complexes.

The protein localises to the cellular thylakoid membrane. In terms of biological role, one of the extrinsic, lumenal subunits of photosystem II (PSII). PSII is a light-driven water plastoquinone oxidoreductase, using light energy to abstract electrons from H(2)O, generating a proton gradient subsequently used for ATP formation. The extrinsic proteins stabilize the structure of photosystem II oxygen-evolving complex (OEC), the ion environment of oxygen evolution and protect the OEC against heat-induced inactivation. The chain is Photosystem II extrinsic protein U from Prochlorococcus marinus (strain MIT 9313).